The following is a 62-amino-acid chain: MAKCYVTGKTTSFGNKRSHALNASRRTWKANLQTVRIKDENGNVKRVKISAKALKKLELERV.

It belongs to the bacterial ribosomal protein bL28 family.

The sequence is that of Large ribosomal subunit protein bL28 from Acholeplasma laidlawii (strain PG-8A).